An 82-amino-acid chain; its full sequence is Penaeidin-3f (82 aa).

Residues 1 to 19 form the signal peptide; it reads MRLVACLVFLASFALVCQG. Pyrrolidone carboxylic acid is present on Q20. 3 cysteine pairs are disulfide-bonded: C51–C66, C55–C73, and C67–C74. S81 is subject to Serine amide.

Belongs to the penaeidin family.

It localises to the cytoplasmic granule. In terms of biological role, antibacterial and antifungal activity. Presents chitin-binding activity. The chain is Penaeidin-3f from Penaeus vannamei (Whiteleg shrimp).